A 505-amino-acid polypeptide reads, in one-letter code: L-carnitine/gamma-butyrobetaine antiporter (505 aa).

The next 12 helical transmembrane spans lie at 10 to 30 (IEPKVFFPPLIIVGILCWLTV), 51 to 71 (WGWAFEWYMVVMLFGWFWLVF), 92 to 112 (IFMMFASCTSAAVLFWGSIEI), 143 to 163 (GPLPWATYSFLSVAFAYFFFV), 195 to 215 (FYLVALIFAMGTSLGLATPLV), 231 to 251 (LDAIIITCWIILNAICVACGL), 263 to 283 (SYLSFLMLGWVFIVSGASFIM), 316 to 336 (WTVFYWAWWVIYAIQMSIFLA), 347 to 367 (LCFGMVMGLTASTWILWTVLG), 403 to 423 (LSTATMWGFFILCFIATVTLI), 446 to 466 (LLVRIGWSVLVGIIGIVLLAL), and 475 to 495 (AIIAGGCPLFFINIMVTLSFI).

It belongs to the BCCT transporter (TC 2.A.15) family. CaiT subfamily. As to quaternary structure, homotrimer.

The protein localises to the cell inner membrane. The catalysed reaction is 4-(trimethylamino)butanoate(in) + (R)-carnitine(out) = 4-(trimethylamino)butanoate(out) + (R)-carnitine(in). Its pathway is amine and polyamine metabolism; carnitine metabolism. Its function is as follows. Catalyzes the exchange of L-carnitine for gamma-butyrobetaine. The polypeptide is L-carnitine/gamma-butyrobetaine antiporter (Salmonella choleraesuis (strain SC-B67)).